The sequence spans 41 residues: Photosystem I reaction center subunit IX (41 aa).

Residues 7–27 (YLSTAPVLLTIWLTFTAGFII) traverse the membrane as a helical segment.

It belongs to the PsaJ family.

Its subcellular location is the plastid. It localises to the chloroplast thylakoid membrane. Functionally, may help in the organization of the PsaE and PsaF subunits. This is Photosystem I reaction center subunit IX from Phaeodactylum tricornutum (strain CCAP 1055/1).